The following is a 491-amino-acid chain: Ketol-acid reductoisomerase (NADP(+)) (491 aa).

The region spanning 15–208 (AQLGKCRFMG…GGHRAGVLES (194 aa)) is the KARI N-terminal Rossmann domain. NADP(+) is bound by residues 45-48 (CGAQ), R68, R76, S78, and 108-110 (DKQ). H132 is a catalytic residue. G158 contacts NADP(+). KARI C-terminal knotted domains lie at 209 to 344 (SFVA…TAPQ) and 345 to 484 (YEGK…MTDM). Mg(2+)-binding residues include D217, E221, E389, and E393. S414 is a binding site for substrate.

It belongs to the ketol-acid reductoisomerase family. The cofactor is Mg(2+).

It catalyses the reaction (2R)-2,3-dihydroxy-3-methylbutanoate + NADP(+) = (2S)-2-acetolactate + NADPH + H(+). The enzyme catalyses (2R,3R)-2,3-dihydroxy-3-methylpentanoate + NADP(+) = (S)-2-ethyl-2-hydroxy-3-oxobutanoate + NADPH + H(+). It participates in amino-acid biosynthesis; L-isoleucine biosynthesis; L-isoleucine from 2-oxobutanoate: step 2/4. It functions in the pathway amino-acid biosynthesis; L-valine biosynthesis; L-valine from pyruvate: step 2/4. Involved in the biosynthesis of branched-chain amino acids (BCAA). Catalyzes an alkyl-migration followed by a ketol-acid reduction of (S)-2-acetolactate (S2AL) to yield (R)-2,3-dihydroxy-isovalerate. In the isomerase reaction, S2AL is rearranged via a Mg-dependent methyl migration to produce 3-hydroxy-3-methyl-2-ketobutyrate (HMKB). In the reductase reaction, this 2-ketoacid undergoes a metal-dependent reduction by NADPH to yield (R)-2,3-dihydroxy-isovalerate. In Klebsiella pneumoniae (strain 342), this protein is Ketol-acid reductoisomerase (NADP(+)).